The primary structure comprises 800 residues: Signaling protein YkoW (800 aa).

A run of 7 helical transmembrane segments spans residues Val-5–Leu-27, Trp-44–Ala-66, Glu-76–Val-98, Leu-103–Ile-125, Ile-135–Leu-157, Val-178–Phe-200, and Thr-215–Ser-237. An MHYT domain is found at Tyr-7–His-201. A PAS domain is found at Gln-255–Ala-319. Positions Tyr-402 to Phe-536 constitute a GGDEF domain. One can recognise an EAL domain in the interval Lys-545 to Pro-798.

Its subcellular location is the cell membrane. Functionally, probable signaling protein whose physiological role is not yet known. This chain is Signaling protein YkoW (ykoW), found in Bacillus subtilis (strain 168).